We begin with the raw amino-acid sequence, 732 residues long: uncharacterized protein (732 aa).

Disordered stretches follow at residues 38–90 (TTLA…NNNK) and 226–629 (EESP…MDYQ). Positions 47–56 (QQQQQQQQQQ) are enriched in low complexity. Residues 57–76 (PPSSSTTKEGGATTTQDNKL) show a composition bias toward polar residues. Low complexity-rich tracts occupy residues 77 to 89 (TANGGTTADNNNN), 231 to 247 (TTTTAAATTTTTTTTAA), and 254 to 318 (TTTT…GTNS). Over residues 327–338 (KAKKGVPKKAPT) the composition is skewed to basic residues. Low complexity-rich tracts occupy residues 339–383 (KKQP…APKT), 401–421 (KTSKSQATTTTTTTTVQSTTK), and 487–523 (SASTAKPTPTTTTTTTTTTKPKSTIAKTSTSTTIKSK). A compositionally biased stretch (acidic residues) spans 553 to 566 (AAAEEQEEEEEEDN). Low complexity-rich tracts occupy residues 567-577 (SNGIQNNNSSN) and 593-609 (DNFSNFGSSNGNGNGLL). Residues 610–621 (SEDDDDDDDDDN) are compositionally biased toward acidic residues.

This is an uncharacterized protein from Dictyostelium discoideum (Social amoeba).